The primary structure comprises 574 residues: Glycine--tRNA ligase (574 aa).

Substrate-binding residues include arginine 96 and glutamate 162. Residues 194 to 196, 204 to 209, 327 to 328, and 450 to 453 contribute to the ATP site; these read RNE, IRLREF, EC, and GIDR. 209–213 provides a ligand contact to substrate; that stretch reads FTQAE. Residue 446-450 participates in substrate binding; it reads EPSYG.

It belongs to the class-II aminoacyl-tRNA synthetase family.

Its subcellular location is the cytoplasm. It carries out the reaction tRNA(Gly) + glycine + ATP = glycyl-tRNA(Gly) + AMP + diphosphate. Functionally, catalyzes the attachment of glycine to tRNA(Gly). The chain is Glycine--tRNA ligase from Methanococcus maripaludis (strain DSM 14266 / JCM 13030 / NBRC 101832 / S2 / LL).